Consider the following 640-residue polypeptide: Chaperone protein DnaK (640 aa).

T199 is modified (phosphothreonine; by autocatalysis). Low complexity predominate over residues 606-621 (QQAAGAGAQQADGTGK). The segment at 606–640 (QQAAGAGAQQADGTGKAADDGVVDAEFEEVKEDNK) is disordered. Positions 626 to 640 (GVVDAEFEEVKEDNK) are enriched in acidic residues.

It belongs to the heat shock protein 70 family.

Acts as a chaperone. The polypeptide is Chaperone protein DnaK (Cellvibrio japonicus (strain Ueda107) (Pseudomonas fluorescens subsp. cellulosa)).